Here is a 551-residue protein sequence, read N- to C-terminus: Tripartite motif-containing protein 5 (551 aa).

Ala2 is modified (N-acetylalanine). An RING-type zinc finger spans residues 15–55 (CPICLELLTEPLSLDCGHSFCQACITANHKESRERSCPLCR). Ser82 is modified (phosphoserine). A B box-type zinc finger spans residues 87 to 128 (QKVDRCARHGEKLLLFCQQHGNVICWLCERSEEHRGHRTSLV). Positions 92, 95, 114, and 120 each coordinate Zn(2+). The stretch at 127–221 (LVEEVAQKYR…VQSENDMVLQ (95 aa)) forms a coiled coil. The tract at residues 182 to 195 (FKQLRDILDCEESN) is required for interaction with GABARAP and for autophagy. The B30.2/SPRY domain occupies 276–551 (PDLKGMLQVF…LPMTLCSPSS (276 aa)).

This sequence belongs to the TRIM/RBCC family. In terms of assembly, can form homodimers and homotrimers. In addition to lower-order dimerization, also exhibits a higher-order multimerization and both low- and high-order multimerizations are essential for its restriction activity. Interacts with BTBD1 and BTBD2. Interacts with PSMC4, PSMC5, PSMD7 and HSPA8/HSC70. Interacts (via B30.2/SPRY domain) with HSPA1A/B. Interacts with PSMC2, MAP3K7/TAK1, TAB2 and TAB3. Interacts with SQSTM1. Interacts with TRIM6 and TRIM34. Interacts with ULK1 (phosphorylated form), GABARAP, GABARAPL1, GABARAPL2, MAP1LC3A, MAP1LC3C and BECN1. Post-translationally, degraded in a proteasome-independent fashion in the absence of viral infection but in a proteasome-dependent fashion following exposure to restriction sensitive virus. In terms of processing, autoubiquitinated in a RING finger- and UBE2D2-dependent manner. Monoubiquitinated by TRIM21. Deubiquitinated by Yersinia YopJ. Ubiquitination may not lead to proteasomal degradation.

The protein localises to the cytoplasm. It localises to the nucleus. The catalysed reaction is S-ubiquitinyl-[E2 ubiquitin-conjugating enzyme]-L-cysteine + [acceptor protein]-L-lysine = [E2 ubiquitin-conjugating enzyme]-L-cysteine + N(6)-ubiquitinyl-[acceptor protein]-L-lysine.. It participates in protein modification; protein ubiquitination. Its function is as follows. Capsid-specific restriction factor that prevents infection from non-host-adapted retroviruses. Blocks viral replication early in the life cycle, after viral entry but before reverse transcription. In addition to acting as a capsid-specific restriction factor, also acts as a pattern recognition receptor that activates innate immune signaling in response to the retroviral capsid lattice. Binding to the viral capsid triggers its E3 ubiquitin ligase activity, and in concert with the heterodimeric ubiquitin conjugating enzyme complex UBE2V1-UBE2N (also known as UBC13-UEV1A complex) generates 'Lys-63'-linked polyubiquitin chains, which in turn are catalysts in the autophosphorylation of the MAP3K7/TAK1 complex (includes TAK1, TAB2, and TAB3). Activation of the MAP3K7/TAK1 complex by autophosphorylation results in the induction and expression of NF-kappa-B and MAPK-responsive inflammatory genes, thereby leading to an innate immune response in the infected cell. Plays a role in regulating autophagy through activation of autophagy regulator BECN1 by causing its dissociation from its inhibitors BCL2 and TAB2. This is Tripartite motif-containing protein 5 (TRIM5) from Alouatta sara (Bolivian red howler monkey).